Here is a 202-residue protein sequence, read N- to C-terminus: Adapter protein MecA 2 (202 aa).

It belongs to the MecA family. As to quaternary structure, homodimer.

In terms of biological role, enables the recognition and targeting of unfolded and aggregated proteins to the ClpC protease or to other proteins involved in proteolysis. Acts negatively in the development of competence by binding ComK and recruiting it to the ClpCP protease. When overexpressed, inhibits sporulation. Also involved in Spx degradation by ClpC. This is Adapter protein MecA 2 (mecA2) from Bacillus anthracis.